The sequence spans 107 residues: Phosphoribosyl-ATP pyrophosphatase (107 aa).

Belongs to the PRA-PH family.

The protein localises to the cytoplasm. The catalysed reaction is 1-(5-phospho-beta-D-ribosyl)-ATP + H2O = 1-(5-phospho-beta-D-ribosyl)-5'-AMP + diphosphate + H(+). The protein operates within amino-acid biosynthesis; L-histidine biosynthesis; L-histidine from 5-phospho-alpha-D-ribose 1-diphosphate: step 2/9. The chain is Phosphoribosyl-ATP pyrophosphatase from Bacillus cereus (strain ATCC 14579 / DSM 31 / CCUG 7414 / JCM 2152 / NBRC 15305 / NCIMB 9373 / NCTC 2599 / NRRL B-3711).